A 157-amino-acid polypeptide reads, in one-letter code: Small ribosomal subunit protein uS7 (157 aa).

It belongs to the universal ribosomal protein uS7 family. Part of the 30S ribosomal subunit. Contacts proteins S9 and S11.

One of the primary rRNA binding proteins, it binds directly to 16S rRNA where it nucleates assembly of the head domain of the 30S subunit. Is located at the subunit interface close to the decoding center, probably blocks exit of the E-site tRNA. The polypeptide is Small ribosomal subunit protein uS7 (Francisella philomiragia subsp. philomiragia (strain ATCC 25017 / CCUG 19701 / FSC 153 / O#319-036)).